A 160-amino-acid chain; its full sequence is uncharacterized protein (160 aa).

Its subcellular location is the cytoplasm. The protein resides in the nucleus. This is an uncharacterized protein from Schizosaccharomyces pombe (strain 972 / ATCC 24843) (Fission yeast).